The sequence spans 319 residues: Dehydrogenase/reductase SDR family member 9 (319 aa).

Positions 1–20 (MLLWVLALLFLCAFLWNYKG) are cleaved as a signal peptide. Residues 34–58 (ITGC…RVIA) and D83 contribute to the NAD(+) site. S164 provides a ligand contact to substrate. Residue Y176 is the Proton acceptor of the active site. Residue K180 coordinates NAD(+).

This sequence belongs to the short-chain dehydrogenases/reductases (SDR) family. As to quaternary structure, homotetramer. As to expression, highly expressed in epithelium of estrus uterus.

It is found in the microsome membrane. The protein resides in the endoplasmic reticulum membrane. It catalyses the reaction 3beta-hydroxy-5alpha-pregnane-20-one + NAD(+) = 5alpha-pregnane-3,20-dione + NADH + H(+). The catalysed reaction is 17beta-hydroxy-5alpha-androstan-3-one + NAD(+) = 5alpha-androstan-3,17-dione + NADH + H(+). The enzyme catalyses androsterone + NAD(+) = 5alpha-androstan-3,17-dione + NADH + H(+). It carries out the reaction 5alpha-androstane-3alpha,17beta-diol + NAD(+) = 17beta-hydroxy-5alpha-androstan-3-one + NADH + H(+). It catalyses the reaction all-trans-retinol + NAD(+) = all-trans-retinal + NADH + H(+). The catalysed reaction is 3alpha-hydroxy-5alpha-pregnan-20-one + NAD(+) = 5alpha-pregnane-3,20-dione + NADH + H(+). 3-alpha-hydroxysteroid dehydrogenase that converts 3-alpha-tetrahydroprogesterone (allopregnanolone) to dihydroxyprogesterone and 3-alpha-androstanediol to dihydroxyprogesterone. Plays also role in the biosynthesis of retinoic acid from retinaldehyde. Can utilize both NADH and NADPH. The protein is Dehydrogenase/reductase SDR family member 9 (Dhrs9) of Rattus norvegicus (Rat).